A 262-amino-acid polypeptide reads, in one-letter code: Acyl-[acyl-carrier-protein]--UDP-N-acetylglucosamine O-acyltransferase (262 aa).

This sequence belongs to the transferase hexapeptide repeat family. LpxA subfamily. In terms of assembly, homotrimer.

The protein localises to the cytoplasm. The enzyme catalyses a (3R)-hydroxyacyl-[ACP] + UDP-N-acetyl-alpha-D-glucosamine = a UDP-3-O-[(3R)-3-hydroxyacyl]-N-acetyl-alpha-D-glucosamine + holo-[ACP]. Its pathway is glycolipid biosynthesis; lipid IV(A) biosynthesis; lipid IV(A) from (3R)-3-hydroxytetradecanoyl-[acyl-carrier-protein] and UDP-N-acetyl-alpha-D-glucosamine: step 1/6. Involved in the biosynthesis of lipid A, a phosphorylated glycolipid that anchors the lipopolysaccharide to the outer membrane of the cell. The polypeptide is Acyl-[acyl-carrier-protein]--UDP-N-acetylglucosamine O-acyltransferase (Salmonella heidelberg (strain SL476)).